The sequence spans 686 residues: Tripartite terminase subunit 3 (686 aa).

The Walker A motif signature appears at 220–227; it reads IPRRHGKT. A Walker B motif motif is present at residues 315–320; that stretch reads LLFVDE. The active-site For ATPase activity is E320. Active-site for nuclease activity residues include D474, E546, and D658.

Belongs to the herpesviridae TRM3 protein family. In terms of assembly, interacts with the terminase subunits TRM1 and TRM2. Interacts with portal protein.

Its subcellular location is the host nucleus. Functionally, component of the molecular motor that translocates viral genomic DNA in empty capsid during DNA packaging. Forms a tripartite terminase complex together with TRM1 and TRM2 in the host cytoplasm. Once the complex reaches the host nucleus, it interacts with the capsid portal vertex. This portal forms a ring in which genomic DNA is translocated into the capsid. TRM3 carries an RNase H-like nuclease activity that plays an important role for the cleavage of concatemeric viral DNA into unit length genomes. This is Tripartite terminase subunit 3 from Alcelaphine herpesvirus 1 (strain C500) (AlHV-1).